We begin with the raw amino-acid sequence, 288 residues long: Plasmodesmata-located protein 6 (288 aa).

An N-terminal signal peptide occupies residues 1–22; the sequence is MFATKTVLFIAVVSLLGTFSSA. Residues 23–256 are Extracellular-facing; the sequence is AVDTFIYGGC…NNDDDEIEKT (234 aa). Gnk2-homologous domains are found at residues 25 to 132 and 137 to 234; these read DTFI…NTTF and DKTV…ARGG. Disulfide bonds link Cys-32/Cys-110, Cys-84/Cys-95, Cys-98/Cys-123, Cys-145/Cys-212, Cys-188/Cys-197, and Cys-200/Cys-225. The helical transmembrane segment at 257–277 threads the bilayer; sequence LAIIVGLIAGVTLLVVFLSFM. Residues 257 to 277 form a necessary and sufficient for plasmodesmal targeting region; sequence LAIIVGLIAGVTLLVVFLSFM. The Cytoplasmic segment spans residues 278–288; it reads AKSCERGKGGK.

Belongs to the cysteine-rich repeat secretory protein family. Plasmodesmata-located proteins (PDLD) subfamily. In terms of assembly, (Microbial infection) Interacts with Grapevine fanleaf virus (GFLV) 2B-MP. Highly expressed in inflorescence silique (at mRNA level).

The protein localises to the cell membrane. It is found in the cell junction. Its subcellular location is the plasmodesma. Modulates cell-to-cell trafficking. This chain is Plasmodesmata-located protein 6, found in Arabidopsis thaliana (Mouse-ear cress).